A 188-amino-acid polypeptide reads, in one-letter code: Elongation factor P (188 aa).

This sequence belongs to the elongation factor P family.

It localises to the cytoplasm. The protein operates within protein biosynthesis; polypeptide chain elongation. In terms of biological role, involved in peptide bond synthesis. Stimulates efficient translation and peptide-bond synthesis on native or reconstituted 70S ribosomes in vitro. Probably functions indirectly by altering the affinity of the ribosome for aminoacyl-tRNA, thus increasing their reactivity as acceptors for peptidyl transferase. The polypeptide is Elongation factor P (Rickettsia typhi (strain ATCC VR-144 / Wilmington)).